Consider the following 1089-residue polypeptide: Ankyrin repeat and IBR domain-containing protein 1 (1089 aa).

The N-myristoyl glycine moiety is linked to residue Gly-2. ANK repeat units follow at residues 45–74 and 144–173; these read QHNT…NPNK and KKNT…DLFA. The segment at 281–321 is disordered; that stretch reads CQRSGVQMPTPPPSGYNAWDTLPSPRTPRTTRSSVTSPDEI. Over residues 303–318 the composition is skewed to low complexity; it reads PSPRTPRTTRSSVTSP. Residues 329 to 569 form a TRIAD supradomain region; sequence DTSLCDICMC…GGYYRCTRYE (241 aa). Residues Cys-333, Cys-336, Cys-351, His-353, Cys-356, Cys-359, Cys-378, Cys-383, Cys-465, Cys-468, His-473, Cys-478, Cys-519, and Cys-522 each coordinate Zn(2+). An RING-type 1 zinc finger spans residues 333–383; that stretch reads CDICMCSISVFEDPVDMPCGHDFCRGCWESFLNLKIQEGEAHNIFCPAYDC. The IBR-type zinc-finger motif lies at 401–478; the sequence is DKRYLQFDIK…LGEAHEPCDC (78 aa). The segment at 519 to 548 adopts an RING-type 2; atypical zinc-finger fold; it reads CANCKSPIQKNEGCNHMQCAKCKYDFCWIC. Residue Cys-532 is part of the active site. Zn(2+) is bound by residues Cys-537, Cys-540, Cys-545, Cys-548, His-555, and Cys-565. A coiled-coil region spans residues 575–640; that stretch reads EEQSKEMTVE…RALKETEGGC (66 aa). At Ser-737 the chain carries Phosphoserine. The segment at 776–821 is disordered; that stretch reads RRGDVHSLLSNPPDPDEPSESTLDIPEGGSSSRRPGTSVVSSASMS. One can recognise a UIM domain in the interval 851–870; the sequence is EDDPNILLAIQLSLQESGLA. Ser-884 and Ser-911 each carry phosphoserine. Disordered stretches follow at residues 889–912, 927–964, and 1026–1089; these read GTSL…ALSS, AEND…QDPN, and DASV…VHLV. Polar residues-rich tracts occupy residues 931 to 941 and 1070 to 1082; these read PFSTDTLSSHP and DVSS…SSDW.

This sequence belongs to the RBR family.

It carries out the reaction [E2 ubiquitin-conjugating enzyme]-S-ubiquitinyl-L-cysteine + [acceptor protein]-L-lysine = [E2 ubiquitin-conjugating enzyme]-L-cysteine + [acceptor protein]-N(6)-ubiquitinyl-L-lysine.. Its function is as follows. Might act as an E3 ubiquitin-protein ligase, or as part of E3 complex, which accepts ubiquitin from specific E2 ubiquitin-conjugating enzymes and then transfers it to substrates. The polypeptide is Ankyrin repeat and IBR domain-containing protein 1 (ANKIB1) (Homo sapiens (Human)).